We begin with the raw amino-acid sequence, 182 residues long: Peptidyl-tRNA hydrolase (182 aa).

Tyr14 contacts tRNA. His19 (proton acceptor) is an active-site residue. Phe60, Asn62, and Asn106 together coordinate tRNA.

This sequence belongs to the PTH family. Monomer.

Its subcellular location is the cytoplasm. It catalyses the reaction an N-acyl-L-alpha-aminoacyl-tRNA + H2O = an N-acyl-L-amino acid + a tRNA + H(+). In terms of biological role, hydrolyzes ribosome-free peptidyl-tRNAs (with 1 or more amino acids incorporated), which drop off the ribosome during protein synthesis, or as a result of ribosome stalling. Functionally, catalyzes the release of premature peptidyl moieties from peptidyl-tRNA molecules trapped in stalled 50S ribosomal subunits, and thus maintains levels of free tRNAs and 50S ribosomes. In Campylobacter concisus (strain 13826), this protein is Peptidyl-tRNA hydrolase.